The sequence spans 650 residues: MTPQSLYKVPSDIAENALVNNDQYKKMYQESIINPEGFWREHGKRIDWIKPYTKIKKTSFDDHNLSINWFYDGTLNASANCLDRHLEEHGDKLAIIWEGDDANEQRKLTYAELHTQVCKFANALRSQGVNKGDIVTIYMPMVPEAAVAMLACARIGAVHSVVFGGFSPDSIAARVIDGKSKVLITADEGIRGGRKIPLKRSIDEAISNPDVTCVEKVIVFKRTGGDIDWVEGRDVWWHSLMEVASEFCQPAEMNAEDPLFLLYTSGSTGNPKGVLHTTGGYMVYASMTHEYVFDYKADEVYWCTADVGWITGHSYMVYGPFANAATVLIHEGVPNHPTPARLGEMIDRHKVNILYTAPTLIRALMAEGKEQFSSYKGDSLRIMGSVGEPINPEAWRWYHEVIGHENCPIVDTWWQTETGGILISPLPGATDTKPGSATRPFFGVQPALVDNMGDIVEGTGEGNLVILDSWPGQMRTVYGDHDRFALTYFKTFRGMYFTGDGARRDEDGYYWITGRVDDVINVSGHRLGTAEVESALVSHELVAEAAVVGYPHDIKGQGIYAYVTLTRGIEPTEELRQELRQWVRKEIGALATPDLIQWASGLPKTRSGKIMRRFLRKIAANEVTNLGDSSTLADPAVIDTLIESRLNKTE.

Residues 191–194 (RGGR), T311, and N335 contribute to the CoA site. Residues 387–389 (GEP), 411–416 (DTWWQT), D500, and R515 each bind ATP. S523 lines the CoA pocket. R526 lines the ATP pocket. Positions 537, 539, and 542 each coordinate Mg(2+). R584 contacts CoA. N6-acetyllysine is present on K609.

Belongs to the ATP-dependent AMP-binding enzyme family. The cofactor is Mg(2+). Acetylated. Deacetylation by the SIR2-homolog deacetylase activates the enzyme.

The enzyme catalyses acetate + ATP + CoA = acetyl-CoA + AMP + diphosphate. Catalyzes the conversion of acetate into acetyl-CoA (AcCoA), an essential intermediate at the junction of anabolic and catabolic pathways. AcsA undergoes a two-step reaction. In the first half reaction, AcsA combines acetate with ATP to form acetyl-adenylate (AcAMP) intermediate. In the second half reaction, it can then transfer the acetyl group from AcAMP to the sulfhydryl group of CoA, forming the product AcCoA. This Shewanella frigidimarina (strain NCIMB 400) protein is Acetyl-coenzyme A synthetase.